A 167-amino-acid polypeptide reads, in one-letter code: Large ribosomal subunit protein uL10 (167 aa).

The protein belongs to the universal ribosomal protein uL10 family. As to quaternary structure, part of the ribosomal stalk of the 50S ribosomal subunit. The N-terminus interacts with L11 and the large rRNA to form the base of the stalk. The C-terminus forms an elongated spine to which L12 dimers bind in a sequential fashion forming a multimeric L10(L12)X complex.

Its function is as follows. Forms part of the ribosomal stalk, playing a central role in the interaction of the ribosome with GTP-bound translation factors. This chain is Large ribosomal subunit protein uL10, found in Latilactobacillus sakei subsp. sakei (strain 23K) (Lactobacillus sakei subsp. sakei).